Here is a 353-residue protein sequence, read N- to C-terminus: Methylthioribose-1-phosphate isomerase (353 aa).

Substrate-binding positions include 51-53 (RGA), Arg-94, and Gln-203. Asp-244 (proton donor) is an active-site residue. 254 to 255 (NK) is a substrate binding site.

The protein belongs to the eIF-2B alpha/beta/delta subunits family. MtnA subfamily.

It catalyses the reaction 5-(methylsulfanyl)-alpha-D-ribose 1-phosphate = 5-(methylsulfanyl)-D-ribulose 1-phosphate. The protein operates within amino-acid biosynthesis; L-methionine biosynthesis via salvage pathway; L-methionine from S-methyl-5-thio-alpha-D-ribose 1-phosphate: step 1/6. Its function is as follows. Catalyzes the interconversion of methylthioribose-1-phosphate (MTR-1-P) into methylthioribulose-1-phosphate (MTRu-1-P). The protein is Methylthioribose-1-phosphate isomerase of Nostoc punctiforme (strain ATCC 29133 / PCC 73102).